Reading from the N-terminus, the 371-residue chain is Cytochrome b (371 aa).

Helical transmembrane passes span F25–V45, W69–I90, W105–L125, and F170–I190. Positions 75 and 89 each coordinate heme b. H174 and H188 together coordinate heme b. H193 serves as a coordination point for a ubiquinone. Helical transmembrane passes span H218–F238, L280–H300, F312–T332, and F339–P358.

The protein belongs to the cytochrome b family. In terms of assembly, the cytochrome bc1 complex contains 3 respiratory subunits (MT-CYB, CYC1 and UQCRFS1), 2 core proteins (UQCRC1 and UQCRC2) and probably 6 low-molecular weight proteins. Heme b is required as a cofactor.

It localises to the mitochondrion inner membrane. Functionally, component of the ubiquinol-cytochrome c reductase complex (complex III or cytochrome b-c1 complex) that is part of the mitochondrial respiratory chain. The b-c1 complex mediates electron transfer from ubiquinol to cytochrome c. Contributes to the generation of a proton gradient across the mitochondrial membrane that is then used for ATP synthesis. The chain is Cytochrome b (MT-CYB) from Leiopython albertisii (Northern white-lipped python).